A 347-amino-acid chain; its full sequence is NADH-ubiquinone oxidoreductase chain 2 (347 aa).

The next 11 helical transmembrane spans lie at 2-22, 26-46, 60-80, 94-114, 127-147, 151-171, 179-197, 201-223, 242-262, 274-294, and 325-345; these read LSPL…LVTF, SWIL…PLMA, YFIA…LAAW, IILN…PMHF, TGMI…IQIA, NNAF…WGGL, IIAY…MAPF, ITWV…LNTL, MLLL…GFTN, NLVI…FFYT, and LMTM…AIFI.

Belongs to the complex I subunit 2 family.

It localises to the mitochondrion inner membrane. It catalyses the reaction a ubiquinone + NADH + 5 H(+)(in) = a ubiquinol + NAD(+) + 4 H(+)(out). Its function is as follows. Core subunit of the mitochondrial membrane respiratory chain NADH dehydrogenase (Complex I) that is believed to belong to the minimal assembly required for catalysis. Complex I functions in the transfer of electrons from NADH to the respiratory chain. The immediate electron acceptor for the enzyme is believed to be ubiquinone. This Lampetra fluviatilis (European river lamprey) protein is NADH-ubiquinone oxidoreductase chain 2 (MT-ND2).